The following is a 249-amino-acid chain: ATP synthase subunit a (249 aa).

The next 6 helical transmembrane spans lie at 30–50 (QSPL…YVGM), 86–106 (FFPF…LGLL), 115–135 (HIAV…LASI), 146–166 (FLPA…EIIS), 191–211 (VFAG…VLAI), and 218–238 (IALT…FAIL).

Belongs to the ATPase A chain family. In terms of assembly, F-type ATPases have 2 components, CF(1) - the catalytic core - and CF(0) - the membrane proton channel. CF(1) has five subunits: alpha(3), beta(3), gamma(1), delta(1), epsilon(1). CF(0) has three main subunits: a(1), b(2) and c(9-12). The alpha and beta chains form an alternating ring which encloses part of the gamma chain. CF(1) is attached to CF(0) by a central stalk formed by the gamma and epsilon chains, while a peripheral stalk is formed by the delta and b chains.

It is found in the cell inner membrane. Key component of the proton channel; it plays a direct role in the translocation of protons across the membrane. The chain is ATP synthase subunit a from Gluconobacter oxydans (strain 621H) (Gluconobacter suboxydans).